The sequence spans 315 residues: L-lactate dehydrogenase (315 aa).

Residues V17, D38, K43, Y69, and 83–84 contribute to the NAD(+) site; that span reads GA. 2 residues coordinate substrate: Q86 and R92. NAD(+)-binding positions include S105, 122–124, and S147; that span reads ATN. 124 to 127 provides a ligand contact to substrate; it reads NPVD. Position 152 to 155 (152 to 155) interacts with substrate; it reads DTAR. Beta-D-fructose 1,6-bisphosphate-binding residues include R157 and H172. H179 serves as the catalytic Proton acceptor. Position 223 is a phosphotyrosine (Y223). Residue T232 participates in substrate binding.

Belongs to the LDH/MDH superfamily. LDH family. Homotetramer.

The protein localises to the cytoplasm. It catalyses the reaction (S)-lactate + NAD(+) = pyruvate + NADH + H(+). It functions in the pathway fermentation; pyruvate fermentation to lactate; (S)-lactate from pyruvate: step 1/1. Its activity is regulated as follows. Allosterically activated by fructose 1,6-bisphosphate (FBP). Its function is as follows. Catalyzes the conversion of lactate to pyruvate. This chain is L-lactate dehydrogenase, found in Macrococcus caseolyticus (strain JCSC5402) (Macrococcoides caseolyticum).